A 1323-amino-acid chain; its full sequence is PH domain leucine-rich repeat-containing protein phosphatase 2 (1323 aa).

Residues 150–248 enclose the PH domain; it reads RILLSGIYNV…WQRQASKVVS (99 aa). 22 LRR repeats span residues 250 to 271, 273 to 296, 300 to 321, 323 to 344, 346 to 368, 369 to 390, 392 to 412, 416 to 439, 440 to 460, 461 to 480, 481 to 502, 503 to 524, 526 to 547, 549 to 570, 571 to 592, 595 to 616, 621 to 644, 645 to 666, 669 to 690, 692 to 713, 714 to 735, and 737 to 758; these read RIST…LFYS, DITY…DTLY, QLKG…LCEI, TLTE…IGNL, NLQT…GNLQ, QLSS…YEKL, MLDR…GVLN, HIKH…EGNK, HITH…SSLC, SLEQ…LSGF, SLRT…PVPS, LLTF…ACEA, KIEV…ILSS, SLRK…VEHI, PLEV…LFSK, NLRY…CTGE, MLQL…VGHL, HLRI…KLNK, QLEE…IANC, RLHT…LQLP, QIQF…EALP, and TLQD…TLDI. The PPM-type phosphatase domain maps to 785–1033; that stretch reads SHGLAEMAGQ…DNVGAMVVYL (249 aa). The Mn(2+) site is built by aspartate 820, glycine 821, lysine 985, and aspartate 1024. Positions 1060–1157 are disordered; sequence TIKDAPKPAT…DSDDDQPVEG (98 aa). Positions 1071 to 1097 are enriched in low complexity; it reads SSSSGIASEFSSEMSTSEVSSEVGSTA. Residues 1122-1146 show a composition bias toward polar residues; it reads PTPTSGLFQRQPSSATFSSNQSDNG. Phosphoserine is present on serine 1210. Positions 1285 to 1323 are disordered; the sequence is HDLEEEVKEQMKQHQDSRLEPEPHEEDRTEPPEEFDTAL. Residues 1292-1315 show a composition bias toward basic and acidic residues; that stretch reads KEQMKQHQDSRLEPEPHEEDRTEP.

As to quaternary structure, interacts with AKT1, AKT3 and PRKCB isoform beta-II. Interacts with STK4, RPS6KB1, RAF1. Interacts with FKBP5; FKBP5 acts as a scaffold for PHLPP2 and Akt. Interacts with NHERF1; NHERF1 scaffolds a heterotrimeric complex with PTEN. Mn(2+) is required as a cofactor. As to expression, in colorectal cancer tissue, expression is highest in the surface epithelium of normal colonic mucosa adjacent to the cancer tissue but is largely excluded from the crypt bases. Expression is lost or significantly decreased in 80% of tested tumors (at protein level).

The protein resides in the cytoplasm. It localises to the membrane. The protein localises to the nucleus. The catalysed reaction is O-phospho-L-seryl-[protein] + H2O = L-seryl-[protein] + phosphate. It carries out the reaction O-phospho-L-threonyl-[protein] + H2O = L-threonyl-[protein] + phosphate. Its activity is regulated as follows. Inhibited by AKT1, AKT2 and AKT3. Activated by oleic acid and arachidonic acid. Functionally, protein phosphatase involved in regulation of Akt and PKC signaling. Mediates dephosphorylation in the C-terminal domain hydrophobic motif of members of the AGC Ser/Thr protein kinase family; specifically acts on 'Ser-473' of AKT1, 'Ser-660' of PRKCB isoform beta-II and 'Ser-657' of PRKCA. Akt regulates the balance between cell survival and apoptosis through a cascade that primarily alters the function of transcription factors that regulate pro- and antiapoptotic genes. Dephosphorylation of 'Ser-473' of Akt triggers apoptosis and decreases cell proliferation. Also controls the phosphorylation of AKT3. Dephosphorylates STK4 on 'Thr-387' leading to STK4 activation and apoptosis. Dephosphorylates RPS6KB1 and is involved in regulation of cap-dependent translation. Inhibits cancer cell proliferation and may act as a tumor suppressor. Dephosphorylation of PRKCA and PRKCB leads to their destabilization and degradation. Dephosphorylates RAF1 inhibiting its kinase activity. In Homo sapiens (Human), this protein is PH domain leucine-rich repeat-containing protein phosphatase 2 (PHLPP2).